Consider the following 260-residue polypeptide: Dehydrogenase/reductase SDR family member 4 (260 aa).

18–42 (IVTASTDGIGLAIARRLAQDGAHVV) is an NADP(+) binding site. At K74 the chain carries N6-acetyllysine; alternate. The residue at position 74 (K74) is an N6-succinyllysine; alternate. Residue S151 participates in substrate binding. Residue Y164 is the Proton acceptor of the active site. K168 is an NADP(+) binding site. N6-acetyllysine; alternate is present on K198. N6-succinyllysine; alternate is present on K198. S202 is modified (phosphoserine). The residue at position 209 (K209) is an N6-succinyllysine. The Peroxisomal targeting signal signature appears at 258–260 (SRL).

The protein belongs to the short-chain dehydrogenases/reductases (SDR) family. As to quaternary structure, homotetramer. In terms of tissue distribution, detected in liver and kidney. Detected at lower levels in heart, lung, spleen, small intestine, testis, brain and stomach.

Its subcellular location is the peroxisome. It catalyses the reaction a secondary alcohol + NADP(+) = a ketone + NADPH + H(+). It carries out the reaction 3alpha-hydroxy-5beta-pregnan-20-one + NADP(+) = 5beta-pregnan-3,20-dione + NADPH + H(+). The enzyme catalyses 5beta-dihydrotestosterone + NADPH + H(+) = 5beta-androstane-3alpha,17beta-diol + NADP(+). The catalysed reaction is all-trans-retinol + NADP(+) = all-trans-retinal + NADPH + H(+). It catalyses the reaction isatin + NADPH + H(+) = 3-hydroxyindolin-2-one + NADP(+). Inhibited by flavonoids (kaempferol, quercetin, quercitrin, genistein), myristic acid, pyrazole, barbital, phenobarbital and CuSO4. NADPH-dependent oxidoreductase which catalyzes the reduction of a variety of compounds bearing carbonyl groups including ketosteroids, alpha-dicarbonyl compounds, aldehydes, aromatic ketones and quinones. Reduces all-trans-retinal and 9-cis retinal. Reduces 3-ketosteroids and benzil into 3alpha-hydroxysteroids and S-benzoin, respectively, in contrast to the stereoselectivity of primates DHRS4s which produce 3beta-hydroxysteroids and R-benzoin. In the reverse reaction, catalyze the NADP-dependent oxidation of 3alpha-hydroxysteroids and alcohol, but with much lower efficiency. Involved in the metabolism of 3alpha-hydroxysteroids, retinoid, isatin and xenobiotic carbonyl compounds. The protein is Dehydrogenase/reductase SDR family member 4 (DHRS4) of Oryctolagus cuniculus (Rabbit).